The primary structure comprises 142 residues: Glia maturation factor beta (142 aa).

N-acetylserine is present on S2. Positions 4-139 (SLVVCDVAED…TEEWLREKLG (136 aa)) constitute an ADF-H domain.

The protein belongs to the actin-binding proteins ADF family. GMF subfamily. In terms of processing, phosphorylated; stimulated by phorbol ester.

Functionally, this protein causes differentiation of brain cells, stimulation of neural regeneration, and inhibition of proliferation of tumor cells. The polypeptide is Glia maturation factor beta (GMFB) (Homo sapiens (Human)).